We begin with the raw amino-acid sequence, 180 residues long: ATP-dependent protease subunit HslV (180 aa).

Thr-7 is a catalytic residue. Na(+) is bound by residues Gly-165, Cys-168, and Thr-171.

This sequence belongs to the peptidase T1B family. HslV subfamily. As to quaternary structure, a double ring-shaped homohexamer of HslV is capped on each side by a ring-shaped HslU homohexamer. The assembly of the HslU/HslV complex is dependent on binding of ATP.

It is found in the cytoplasm. It carries out the reaction ATP-dependent cleavage of peptide bonds with broad specificity.. Allosterically activated by HslU binding. Its function is as follows. Protease subunit of a proteasome-like degradation complex believed to be a general protein degrading machinery. This chain is ATP-dependent protease subunit HslV, found in Bacillus anthracis (strain A0248).